The following is a 172-amino-acid chain: Transcription factor MafF (172 aa).

Residues R51–K76 are basic motif. Residues R51–L114 enclose the bZIP domain. The tract at residues L79–L93 is leucine-zipper. A disordered region spans residues V140–S172. A compositionally biased stretch (pro residues) spans S145–S172.

Belongs to the bZIP family. Maf subfamily. As to quaternary structure, monomer and homo- or heterodimer. Interacts with MIP. Forms high affinity heterodimers with members of the CNC-bZIP family such as NFE2L1/NRF1.

The protein resides in the nucleus. Since they lack a putative transactivation domain, the small Mafs behave as transcriptional repressors when they dimerize among themselves. However, they seem to serve as transcriptional activators by dimerizing with other (usually larger) basic-zipper proteins, such as NFE2L1/NRF1, and recruiting them to specific DNA-binding sites. Interacts with the upstream promoter region of the oxytocin receptor gene. May be a transcriptional enhancer in the up-regulation of the oxytocin receptor gene at parturition. In Bos taurus (Bovine), this protein is Transcription factor MafF (MAFF).